A 391-amino-acid chain; its full sequence is Elongation factor Tu (391 aa).

Positions 10 to 201 (KPHVNIGTIG…AVDAYIPTPE (192 aa)) constitute a tr-type G domain. The interval 19–26 (GHVDHGKT) is G1. 19-26 (GHVDHGKT) contacts GTP. Thr26 contributes to the Mg(2+) binding site. Residues 55-59 (GITIS) form a G2 region. A G3 region spans residues 76-79 (DCPG). GTP contacts are provided by residues 76–80 (DCPGH) and 131–134 (NKVD). The interval 131–134 (NKVD) is G4. Positions 169–171 (SAL) are G5.

Belongs to the TRAFAC class translation factor GTPase superfamily. Classic translation factor GTPase family. EF-Tu/EF-1A subfamily. As to quaternary structure, monomer.

The protein resides in the cytoplasm. It carries out the reaction GTP + H2O = GDP + phosphate + H(+). Functionally, GTP hydrolase that promotes the GTP-dependent binding of aminoacyl-tRNA to the A-site of ribosomes during protein biosynthesis. This chain is Elongation factor Tu, found in Rhizobium johnstonii (strain DSM 114642 / LMG 32736 / 3841) (Rhizobium leguminosarum bv. viciae).